We begin with the raw amino-acid sequence, 59 residues long: Large ribosomal subunit protein uL30 (59 aa).

It belongs to the universal ribosomal protein uL30 family. As to quaternary structure, part of the 50S ribosomal subunit.

The chain is Large ribosomal subunit protein uL30 from Geotalea uraniireducens (strain Rf4) (Geobacter uraniireducens).